The sequence spans 504 residues: L-carnitine/gamma-butyrobetaine antiporter (504 aa).

Transmembrane regions (helical) follow at residues 10–30, 51–71, 92–112, 143–163, 195–215, 231–251, 263–283, 316–336, 347–367, 398–418, 446–466, and 475–495; these read IEPK…WLTV, WGWA…WLVF, IFMM…SIEI, GPLP…FFFV, FYLV…TPLV, LDAI…ACGL, SYLS…SFIM, WTVF…IFLA, LCFG…TVLG, WAAL…CFIA, LLVR…LLAL, and AIIA…LSFI.

The protein belongs to the BCCT transporter (TC 2.A.15) family. CaiT subfamily. In terms of assembly, homotrimer.

It localises to the cell inner membrane. It carries out the reaction 4-(trimethylamino)butanoate(in) + (R)-carnitine(out) = 4-(trimethylamino)butanoate(out) + (R)-carnitine(in). The protein operates within amine and polyamine metabolism; carnitine metabolism. In terms of biological role, catalyzes the exchange of L-carnitine for gamma-butyrobetaine. This is L-carnitine/gamma-butyrobetaine antiporter from Escherichia coli O157:H7.